Reading from the N-terminus, the 348-residue chain is MVTIISTMETQANNGPGCVGILNGTNGEADDSKTNLIVNYLPQNMTQEEFKSLFGSIGEIESCKLVRDKITGQSLGYGFVNYVDPNDADKAINTLNGLKLQTKTIKVSYARPSSASIRDANLYVSSLPKTMNQKEMEQLFSQYGRIITSRILVDQVTGVSRGVGFIRFDKRIEAEEAIKGLNGQKPLGASEPITVKFANNPSQKTGQALLTHLYQTTARRYTGPLHHQTQRFSPLSILPRFSPITIDSVTNLAGVSLTGPTTAGWCIFVYNLSPEADESVLWQLFGPFGAVTNVKVIRDFTTNKCKGFGFVTMTNYDEAAMAIASLNGYRLGDRVLQVSFKTSKQHKA.

3 RRM domains span residues 34–112, 120–200, and 265–343; these read TNLI…YARP, ANLY…FANN, and WCIF…FKTS.

Belongs to the RRM elav family. As to expression, expression is neural-specific in both embryos and adults. Expressed from neurula stage onwards in primary motor-, inter- and sensory-neurons. Expressed in the closing neural tube and motor neurons of stage 18 embryos, and primarily in the ventricular zone and dorsal region of the tailbud and adult brain. Expressed from stage 26 onwards in the differentiating ganglion cell layer of the retina, extending to the inner nuclear layer at later stages.

Functionally, RNA-binding protein that binds to AU-rich element (ARE) sequences of target mRNAs. May also bind poly-A tracts via RRM 3. May be involved in neuronal differentiation and maintenance. The sequence is that of ELAV-like protein 3 (elavl3) from Xenopus laevis (African clawed frog).